The primary structure comprises 1100 residues: Protein P2-P3 (1100 aa).

The N-terminal stretch at 1-25 (MALLGIKLMTLVFAAWLSCCHSSSA) is a signal peptide. A run of 2 helical transmembrane segments spans residues 131–151 (AVGMLLMIIIWIWSSIFLVVY) and 165–185 (AVCVGFLIFCTICAFRLISWI). The region spanning 224-416 (VEGYKPFIIP…GLTSPDFKFE (193 aa)) is the Peptidase S39 domain. Catalysis depends on for protease activity residues histidine 272, aspartate 304, and serine 373. Disordered regions lie at residues 463-493 (EEESESDDERGKVVPPAKPSNYGEGCPPEHN) and 530-601 (VAPH…PQGE). Residues 530-542 (VAPHKEEKAEKGK) are compositionally biased toward basic and acidic residues. Over residues 550-561 (GKNRKGTNHPMR) the composition is skewed to basic residues. The segment covering 578–595 (SESHREISGRDPGRESND) has biased composition (basic and acidic residues). The RdRp catalytic domain maps to 897-1012 (ELMVPTDCSG…SIDTTLAVYK (116 aa)).

The protein belongs to the ssRNA positive-strand viruses RNA-directed RNA polymerase family.

Its subcellular location is the host membrane. The catalysed reaction is RNA(n) + a ribonucleoside 5'-triphosphate = RNA(n+1) + diphosphate. Its function is as follows. Precursor from which the RNA-dependent RNA polymerase (RdRp) is probably released. RNA-dependent RNA polymerase plays an essential role in virus replication (Potential). RNA-dependent RNA polymerase replicates the viral genome. The protein is Protein P2-P3 of Poinsettia latent virus (isolate Euphorbia pulcherrima/Germany/Siepen/2005) (PnLV).